A 327-amino-acid chain; its full sequence is ABC transporter periplasmic-binding protein YphF (327 aa).

A signal peptide spans 1-26; sequence MPTKMRTTRNLLLMATLLGSALFARA.

The protein belongs to the bacterial solute-binding protein 2 family.

The protein resides in the periplasm. Probably part of the binding-protein-dependent transport system YphDEF. The protein is ABC transporter periplasmic-binding protein YphF (yphF) of Escherichia coli (strain K12).